The primary structure comprises 126 residues: 14 kDa phosphohistidine phosphatase (126 aa).

Residue K22 participates in substrate binding. The active-site Proton acceptor is the H54. 95–97 (SMG) provides a ligand contact to substrate.

This sequence belongs to the janus family. In terms of assembly, monomer.

The protein localises to the cytoplasm. It carries out the reaction N(pros)-phospho-L-histidyl-[protein] + H2O = L-histidyl-[protein] + phosphate. It catalyses the reaction N(tele)-phospho-L-histidyl-[protein] + H2O = L-histidyl-[protein] + phosphate. In terms of biological role, exhibits phosphohistidine phosphatase activity. The polypeptide is 14 kDa phosphohistidine phosphatase (PHPT1) (Sus scrofa (Pig)).